The following is a 180-amino-acid chain: MFKLLSEIGPVVAFFAGFFYGGGIQSATLYMLITSVICITLCYIIDKKVSRLSIISTAVLLVSGIITLISGDSMYIKIKPTILYVIFGIIFLTSGIKKNPFIKYALESIIRLKEESWITLSYRTATFFFFMAIVNEIVWRNFPDETWVKFKVFGVVPITFVFILLQLPLLLKNKLPDSKI.

6 helical membrane-spanning segments follow: residues 4 to 24 (LLSE…GGGI), 25 to 45 (QSAT…CYII), 52 to 72 (LSII…ISGD), 76 to 96 (IKIK…TSGI), 118 to 138 (ITLS…NEIV), and 150 to 170 (FKVF…LPLL).

It belongs to the YciB family.

It localises to the cell inner membrane. Functionally, plays a role in cell envelope biogenesis, maintenance of cell envelope integrity and membrane homeostasis. This chain is Inner membrane-spanning protein YciB, found in Rickettsia bellii (strain RML369-C).